Reading from the N-terminus, the 139-residue chain is MSTDLFPQAHSKHDLERGFALAPRFNADGLVVAVAQHADTGEILMLAWMNAEALKLTVETQIAHYFSRSRNELWKKGDTSGQLQDVVELRVDCDQDAVLLKVRPRGDGGACHVGFRSCFYRVLENGVLVEREAPLHDHA.

Asp-92 lines the Mg(2+) pocket. Residue Cys-93 coordinates Zn(2+). Mg(2+) contacts are provided by Asp-94 and Asp-96. Positions 111 and 118 each coordinate Zn(2+).

It belongs to the PRA-CH family. In terms of assembly, homodimer. It depends on Mg(2+) as a cofactor. Zn(2+) is required as a cofactor.

It localises to the cytoplasm. The enzyme catalyses 1-(5-phospho-beta-D-ribosyl)-5'-AMP + H2O = 1-(5-phospho-beta-D-ribosyl)-5-[(5-phospho-beta-D-ribosylamino)methylideneamino]imidazole-4-carboxamide. The protein operates within amino-acid biosynthesis; L-histidine biosynthesis; L-histidine from 5-phospho-alpha-D-ribose 1-diphosphate: step 3/9. Catalyzes the hydrolysis of the adenine ring of phosphoribosyl-AMP. In Caulobacter vibrioides (strain ATCC 19089 / CIP 103742 / CB 15) (Caulobacter crescentus), this protein is Phosphoribosyl-AMP cyclohydrolase.